The chain runs to 311 residues: Porphobilinogen deaminase (311 aa).

Cysteine 241 carries the S-(dipyrrolylmethanemethyl)cysteine modification.

This sequence belongs to the HMBS family. In terms of assembly, monomer. The cofactor is dipyrromethane.

The catalysed reaction is 4 porphobilinogen + H2O = hydroxymethylbilane + 4 NH4(+). The protein operates within porphyrin-containing compound metabolism; protoporphyrin-IX biosynthesis; coproporphyrinogen-III from 5-aminolevulinate: step 2/4. In terms of biological role, tetrapolymerization of the monopyrrole PBG into the hydroxymethylbilane pre-uroporphyrinogen in several discrete steps. The chain is Porphobilinogen deaminase from Geobacillus sp. (strain WCH70).